We begin with the raw amino-acid sequence, 193 residues long: MSQQMTLSVQKREGLGKGANRKLRTAKKVPGIFYNSEGKNIPVAIDGTQLEKLYETAGKTTVFNLDIEGETAPCLIWQIERHPYKPFFTHVDLFGVDMEKPIKARIPLKITGVAKGTKIGGRMEVYRDFVDVFTKPGSMPKVIDINVSNMEMGDAVHVADLKLEDGHCIYDSNYVIVRVSAPRGGKGEEGEDA.

This sequence belongs to the bacterial ribosomal protein bL25 family. CTC subfamily. In terms of assembly, part of the 50S ribosomal subunit; part of the 5S rRNA/L5/L18/L25 subcomplex. Contacts the 5S rRNA. Binds to the 5S rRNA independently of L5 and L18.

This is one of the proteins that binds to the 5S RNA in the ribosome where it forms part of the central protuberance. The polypeptide is Large ribosomal subunit protein bL25 (Oleidesulfovibrio alaskensis (strain ATCC BAA-1058 / DSM 17464 / G20) (Desulfovibrio alaskensis)).